A 714-amino-acid polypeptide reads, in one-letter code: Epithelial splicing regulatory protein 1 (714 aa).

RRM domains lie at 225-302 (TVIR…KATG), 326-406 (IIVR…KSTA), and 450-530 (DCVR…ACSA).

Belongs to the ESRP family.

Its subcellular location is the nucleus. Its function is as follows. mRNA splicing factor that regulates the formation of epithelial cell-specific isoforms. Specifically regulates the expression of FGFR2-IIIb, an epithelial cell-specific isoform of fgfr2. Acts by directly binding specific sequences in mRNAs. Binds the GU-rich sequence motifs in the ISE/ISS-3, a cis-element regulatory region present in the mRNA of fgfr2. The chain is Epithelial splicing regulatory protein 1 (esrp1) from Danio rerio (Zebrafish).